An 86-amino-acid polypeptide reads, in one-letter code: Omega-theraphotoxin-Hhn1f 1 (86 aa).

An N-terminal signal peptide occupies residues 1–21; it reads MKSIVFVALFGLALLAVVCSA. A propeptide spanning residues 22–50 is cleaved from the precursor; sequence SEDAHKELLKEVVRAMVVDKTDAVQAEER. 3 cysteine pairs are disulfide-bonded: Cys-52–Cys-66, Cys-59–Cys-71, and Cys-65–Cys-78.

It belongs to the neurotoxin 10 (Hwtx-1) family. 17 (Hntx-9) subfamily. Expressed by the venom gland.

It is found in the secreted. In terms of biological role, ion channel inhibitor. The chain is Omega-theraphotoxin-Hhn1f 1 from Cyriopagopus hainanus (Chinese bird spider).